A 266-amino-acid chain; its full sequence is Undecaprenyl-diphosphatase (266 aa).

7 helical membrane passes run 8 to 28 (VLALVQGLTEFLPISSAAHLI), 39 to 59 (QGLAFDVATHVGSLAAVVIYF), 87 to 107 (WAVGLGTIPAGLAGLLFHDII), 113 to 133 (SAQVIAMATIGFAVLLLFADV), 188 to 208 (SFLLSIPIIALAGGFEILGLV), 219 to 239 (MIVLGALVAGVSAYLCIHYFL), and 246 to 266 (TMLPFVIYRLVLGAFLLFLFW).

The protein belongs to the UppP family.

The protein resides in the cell inner membrane. The enzyme catalyses di-trans,octa-cis-undecaprenyl diphosphate + H2O = di-trans,octa-cis-undecaprenyl phosphate + phosphate + H(+). Its function is as follows. Catalyzes the dephosphorylation of undecaprenyl diphosphate (UPP). Confers resistance to bacitracin. The chain is Undecaprenyl-diphosphatase from Thioalkalivibrio sulfidiphilus (strain HL-EbGR7).